The following is a 303-amino-acid chain: Acetaldehyde dehydrogenase (303 aa).

Catalysis depends on cysteine 130, which acts as the Acyl-thioester intermediate. NAD(+) is bound by residues 161–169 (SVGPGTRKN) and asparagine 272.

The protein belongs to the acetaldehyde dehydrogenase family.

The enzyme catalyses acetaldehyde + NAD(+) + CoA = acetyl-CoA + NADH + H(+). This Verminephrobacter eiseniae (strain EF01-2) protein is Acetaldehyde dehydrogenase.